The following is a 183-amino-acid chain: ATP-dependent protease subunit HslV (183 aa).

Threonine 10 is a catalytic residue. 3 residues coordinate Na(+): alanine 164, cysteine 167, and threonine 170.

Belongs to the peptidase T1B family. HslV subfamily. A double ring-shaped homohexamer of HslV is capped on each side by a ring-shaped HslU homohexamer. The assembly of the HslU/HslV complex is dependent on binding of ATP.

Its subcellular location is the cytoplasm. It catalyses the reaction ATP-dependent cleavage of peptide bonds with broad specificity.. Its activity is regulated as follows. Allosterically activated by HslU binding. Protease subunit of a proteasome-like degradation complex believed to be a general protein degrading machinery. The polypeptide is ATP-dependent protease subunit HslV (Rhizorhabdus wittichii (strain DSM 6014 / CCUG 31198 / JCM 15750 / NBRC 105917 / EY 4224 / RW1) (Sphingomonas wittichii)).